We begin with the raw amino-acid sequence, 386 residues long: Succinate--CoA ligase [ADP-forming] subunit beta (386 aa).

Positions 9–244 (KAILRSYGVS…LDEEDPKEIE (236 aa)) constitute an ATP-grasp domain. Residues Lys46, 53 to 55 (GRG), Glu99, Cys102, and Glu107 each bind ATP. Residues Asn199 and Asp213 each contribute to the Mg(2+) site. Substrate is bound by residues Asn264 and 321 to 323 (GIM).

It belongs to the succinate/malate CoA ligase beta subunit family. As to quaternary structure, heterotetramer of two alpha and two beta subunits. Requires Mg(2+) as cofactor.

It catalyses the reaction succinate + ATP + CoA = succinyl-CoA + ADP + phosphate. The catalysed reaction is GTP + succinate + CoA = succinyl-CoA + GDP + phosphate. The protein operates within carbohydrate metabolism; tricarboxylic acid cycle; succinate from succinyl-CoA (ligase route): step 1/1. Its function is as follows. Succinyl-CoA synthetase functions in the citric acid cycle (TCA), coupling the hydrolysis of succinyl-CoA to the synthesis of either ATP or GTP and thus represents the only step of substrate-level phosphorylation in the TCA. The beta subunit provides nucleotide specificity of the enzyme and binds the substrate succinate, while the binding sites for coenzyme A and phosphate are found in the alpha subunit. The protein is Succinate--CoA ligase [ADP-forming] subunit beta of Bacillus cytotoxicus (strain DSM 22905 / CIP 110041 / 391-98 / NVH 391-98).